Consider the following 181-residue polypeptide: Oligoribonuclease (181 aa).

An Exonuclease domain is found at 8–171 (LIWIDLEMTG…DDIRESVGEL (164 aa)). Residue Tyr-129 is part of the active site.

Belongs to the oligoribonuclease family.

Its subcellular location is the cytoplasm. Functionally, 3'-to-5' exoribonuclease specific for small oligoribonucleotides. The protein is Oligoribonuclease of Serratia proteamaculans (strain 568).